We begin with the raw amino-acid sequence, 467 residues long: Uronate isomerase (467 aa).

Belongs to the metallo-dependent hydrolases superfamily. Uronate isomerase family.

It carries out the reaction D-glucuronate = D-fructuronate. It catalyses the reaction aldehydo-D-galacturonate = keto-D-tagaturonate. It functions in the pathway carbohydrate metabolism; pentose and glucuronate interconversion. This Geobacillus thermodenitrificans (strain NG80-2) protein is Uronate isomerase.